Here is a 326-residue protein sequence, read N- to C-terminus: Probable cell division protein WhiA (326 aa).

The segment at residues serine 275 to arginine 308 is a DNA-binding region (H-T-H motif).

Belongs to the WhiA family.

Functionally, involved in cell division and chromosome segregation. In Salinispora tropica (strain ATCC BAA-916 / DSM 44818 / JCM 13857 / NBRC 105044 / CNB-440), this protein is Probable cell division protein WhiA.